We begin with the raw amino-acid sequence, 122 residues long: Large ribosomal subunit protein uL14 (122 aa).

It belongs to the universal ribosomal protein uL14 family. In terms of assembly, part of the 50S ribosomal subunit. Forms a cluster with proteins L3 and L19. In the 70S ribosome, L14 and L19 interact and together make contacts with the 16S rRNA in bridges B5 and B8.

Functionally, binds to 23S rRNA. Forms part of two intersubunit bridges in the 70S ribosome. The sequence is that of Large ribosomal subunit protein uL14 from Mycoplasma genitalium (strain ATCC 33530 / DSM 19775 / NCTC 10195 / G37) (Mycoplasmoides genitalium).